Here is a 326-residue protein sequence, read N- to C-terminus: Putative replication protein B (326 aa).

It belongs to the ParB family.

The protein is Putative replication protein B of Sinorhizobium fredii (strain NBRC 101917 / NGR234).